Here is a 239-residue protein sequence, read N- to C-terminus: Ribonuclease 3 (239 aa).

One can recognise an RNase III domain in the interval 11 to 133 (HAAIQKKLGY…MFAAVSFDAD (123 aa)). Residue Glu46 participates in Mg(2+) binding. Asp50 is an active-site residue. Asp119 and Glu122 together coordinate Mg(2+). A DRBM domain is found at 160–230 (DGKTALQEAL…AKEALKWLEE (71 aa)).

This sequence belongs to the ribonuclease III family. In terms of assembly, homodimer. It depends on Mg(2+) as a cofactor.

The protein localises to the cytoplasm. It carries out the reaction Endonucleolytic cleavage to 5'-phosphomonoester.. Functionally, digests double-stranded RNA. Involved in the processing of primary rRNA transcript to yield the immediate precursors to the large and small rRNAs (23S and 16S). Also processes some mRNAs, and tRNAs when they are encoded in the rRNA operon. Its function is as follows. CRISPR (clustered regularly interspaced short palindromic repeat) is an adaptive immune system that provides protection against mobile genetic elements (viruses, transposable elements and conjugative plasmids). CRISPR clusters contain spacers, sequences complementary to antecedent mobile elements, and target invading nucleic acids. CRISPR clusters are transcribed and processed into CRISPR RNA (crRNA). In this organism endogenous ribonuclease 3 and Cas9 are required for correct coprocessing of pre-crRNA and the trans-encoded small RNA (tracrRNA). Cas9, crRNA and tracRNA are required for cleavage of invading DNA. Involved in 3'-end processing but not 5'-end processing of crRNA and tracrRNA. In Neisseria meningitidis serogroup C (strain 8013), this protein is Ribonuclease 3.